A 969-amino-acid polypeptide reads, in one-letter code: Manganese resistance protein MNR2 (969 aa).

The span at 1 to 11 (MSTDNSQKDEG) shows a compositional bias: basic and acidic residues. 4 disordered regions span residues 1-49 (MSTD…SRRP), 96-153 (GAFI…DLSP), 167-186 (HKSFVDENSPTDRRQSNANN), and 199-256 (VNNN…NNSS). The Cytoplasmic portion of the chain corresponds to 1–912 (MSTDNSQKDE…DMNDVLGKIT (912 aa)). Residues 13–23 (PLLSPYSSSPQ) show a composition bias toward low complexity. Over residues 24-36 (LRKKKRNQKRRKD) the composition is skewed to basic residues. Residues 37–48 (KFVGHLKSDSRR) are compositionally biased toward basic and acidic residues. Serine 114 carries the phosphoserine modification. Positions 141 to 152 (SDQNRSLVSDLS) are enriched in polar residues. Serine 175 carries the phosphoserine modification. Threonine 177 is modified (phosphothreonine). Serine 182 is subject to Phosphoserine. Composition is skewed to low complexity over residues 225-234 (NKNSKSTSSD) and 244-256 (SRPSSSLSSNNSS). Serine 383 carries the post-translational modification Phosphoserine. 2 disordered regions span residues 559 to 662 (VRRR…KPRE) and 746 to 769 (QSDDSSDSDSSDSDSDSGASDEDA). Positions 565–578 (EKQESATLDHESIS) are enriched in basic and acidic residues. Residue threonine 571 is modified to Phosphothreonine. 2 positions are modified to phosphoserine: serine 576 and serine 582. Low complexity-rich tracts occupy residues 590–607 (SNESNANNNNSTSNASRS) and 622–632 (ANRTTNTSSSS). Residues 749-769 (DSSDSDSSDSDSDSGASDEDA) are compositionally biased toward acidic residues. A helical membrane pass occupies residues 913–933 (ILGTIVLPMNVITGLWGMNVI). Residues 934-941 (VPGQYRDS) are Extracellular-facing. The helical transmembrane segment at 942-962 (LTWFIGIVLFMCMLACSAYMY) threads the bilayer. At 963-969 (TKRRFGF) the chain is on the cytoplasmic side.

This sequence belongs to the CorA metal ion transporter (MIT) (TC 1.A.35) family.

The protein localises to the membrane. This is Manganese resistance protein MNR2 (MNR2) from Saccharomyces cerevisiae (strain ATCC 204508 / S288c) (Baker's yeast).